The chain runs to 167 residues: SAR-endolysin (167 aa).

The chain crosses the membrane as a helical; Signal-anchor for type II membrane protein span at residues 11–31 (VIAAISGGAIAIASVLITGPG). Catalysis depends on proton donor/acceptor residues E37 and D46.

It belongs to the glycosyl hydrolase 24 family.

Its subcellular location is the host cell inner membrane. The catalysed reaction is Hydrolysis of (1-&gt;4)-beta-linkages between N-acetylmuramic acid and N-acetyl-D-glucosamine residues in a peptidoglycan and between N-acetyl-D-glucosamine residues in chitodextrins.. Signal-arrest-release (SAR) endolysin with lysozyme activity that degrades host peptidoglycans and participates with the pinholin and spanin proteins in the sequential events which lead to programmed host cell lysis releasing the mature viral particles. Once the pinholin has permeabilized the host cell membrane, the SAR-endolysin is released into the periplasm where it breaks down the peptidoglycan layer. The polypeptide is SAR-endolysin (19) (Bacteriophage PS34).